Reading from the N-terminus, the 289-residue chain is Mitochondrial fission regulator 1-like (289 aa).

Phosphothreonine is present on Thr27. Residues Ser38, Ser100, Ser107, Ser221, Ser222, Ser235, Ser258, and Ser270 each carry the phosphoserine modification.

Belongs to the MTFR1 family. Post-translationally, phosphorylated by AMPK. Upon stress, phosphorylation by AMPK is sufficient to induce mitochondrial fragmentation.

It is found in the mitochondrion outer membrane. Mitochondrial protein required for adaptation of miochondrial dynamics to metabolic changes. Regulates mitochondrial morphology at steady state and mediates AMPK-dependent stress-induced mitochondrial fragmentation via the control of OPA1 levels. The protein is Mitochondrial fission regulator 1-like (MTFR1L) of Bos taurus (Bovine).